The sequence spans 1164 residues: MKKNTDSEMDQRLGYKFLVPDPKAGVFYRPLHFQYVSYSNFILHRLHEILTVKRPLLSFKNNTERIMIEISNVKVTPPDYSPIIASIKGKSYDALATFTVNIFKEVMTKEGISITKISSYEGKDSHLIKIPLLIGYGNKNPLDTAKYLVPNVIGGVFINKQSVEKVGINLVEKITTWPKFRVVKPNSFTFSFSSVSPPNVLPTRYRHYKISLDISQLEALNISSTKTFITVNIVLLSQYLSRVSLEFIRRSLSYDMPPEVVYLVNAIIDSAKRITESITDFNIDTYINDLVEAEHIKQKSQLTINEFKYEMLHNFLPHMNYTPDQLKGFYMISLLRKFLYCIYHTSRYPDRDSMVCHRILTYGKYFETLAHDELENYIGNIRNDIMNNHKNRGTYAVNIHVLTTPGLNHAFSSLLSGKFKKSDGSYRTHPHYSWMQNISIPRSVGFYPDQVKISKMFSVRKYHPSQYLYFCSSDVPERGPQVGLVSQLSVLSSITNILTSEYLDLEKKICEYIRSYYKDDISYFETGFPITIENALVASLNPNMICDFVTDFRRRKRMGFFGNLEVGITLVRDHMNEIRINIGAGRLVRPFLVVDNGELMMDACPELESRLDDMTFSDIQKEFPHVIEMVDIEQFTFSNVCESVQKFRMMSKDERKQYDLCDFPAEFRDGYVASSLVGINHNSGPRAILGCAQAKQAISCLSSDIRNKIDNGIHLMYPERPIVISKALETSKIAANCFGQHVTIALMSYKGINQEDGIIIKKQFIQRGGLDIVTAKKHQVEIPLENFNNKERDRSNAYSKLESNGLVRLNAFLESGDAIARNISSRTLEDDFARDNQISFDVPEKYTDMYKSRVERVQVELTDKVKVRVLTMKERRPILGDKFTTRTSQKGTVAYVADETELPYDENGITPDVIINSTSIFSRKTISMLIEVILTAAYSAKPYNNKGENRPVCFPSSNETSIDTYMQFAKQCYEHSNPKLSDEELSDKIFCEKILYDPETDKPYASKVFFGPIYYLRLRHLTQDKATVRCRGKKTKLIRQANEGRKRGGGIKFGEMERDCLIAHGAANTITEVLKDSEEDYQDVYVCENCGDIAAQIKGINTCLRCSKLNLSPLLTKIDTTHVSKVFLTQMNARGVKVKLDFERRPPSFYKPLDKVDLKPSFLV.

It belongs to the RNA polymerase beta chain family. In terms of assembly, the DNA-dependent RNA polymerase used for intermediate and late genes expression consists of eight subunits 147 kDa, 133 kDa, 35 kDa, 30 kDa, 22 kDa, 19 kDa, 18 kDa and 7 kDa totalling more than 500 kDa in mass. The same holoenzyme, with the addition of the transcription-specificity factor RAP94, is used for early gene expression.

The protein resides in the virion. The catalysed reaction is RNA(n) + a ribonucleoside 5'-triphosphate = RNA(n+1) + diphosphate. In terms of biological role, part of the DNA-dependent RNA polymerase which catalyzes the transcription of viral DNA into RNA using the four ribonucleoside triphosphates as substrates. Responsible for the transcription of early, intermediate and late genes. DNA-dependent RNA polymerase associates with the early transcription factor (ETF), itself composed of D6 and A7, thereby allowing the early genes transcription. Late transcription, and probably also intermediate transcription, require newly synthesized RNA polymerase. This is DNA-directed RNA polymerase 133 kDa polypeptide (RPO132) from Homo sapiens (Human).